The following is a 389-amino-acid chain: tRNA N(3)-cytidine methyltransferase METTL2 (389 aa).

Residues 1–20 (MAASFPEGVPETEDGKRPQF) are disordered. S-adenosyl-L-methionine-binding residues include Trp78, Tyr82, Gly181, Asp206, Asp232, Leu233, and Ile253.

The protein belongs to the methyltransferase superfamily. METL family. In terms of assembly, monomer. Interacts with DALRD3.

It is found in the cytoplasm. The catalysed reaction is cytidine(32) in tRNA(Thr) + S-adenosyl-L-methionine = N(3)-methylcytidine(32) in tRNA(Thr) + S-adenosyl-L-homocysteine + H(+). The enzyme catalyses cytidine(32) in tRNA(Arg)(CCU) + S-adenosyl-L-methionine = N(3)-methylcytidine(32) in tRNA(Arg)(CCU) + S-adenosyl-L-homocysteine + H(+). Its function is as follows. S-adenosyl-L-methionine-dependent methyltransferase that mediates N(3)-methylcytidine modification of residue 32 of the tRNA anticodon loop of tRNA(Thr)(UGU) and tRNA(Arg)(CCU). N(3)-methylcytidine methylation by METTL2 requires the N6-threonylcarbamoylation of tRNA (t6A37) by the EKC/KEOPS complex as prerequisite. This chain is tRNA N(3)-cytidine methyltransferase METTL2, found in Mus musculus (Mouse).